The following is a 308-amino-acid chain: Ava biosynthesis cluster protein O (308 aa).

Its pathway is secondary metabolite biosynthesis. Part of the cluster that mediates the biosynthesis of a highly modified cyclo-arginine-tryptophan dipeptide (cRW). The first step of the pathway is perfornmed by the arginine-containing cyclodipeptide synthase (RCPDS) avaA that acts as the scaffold-generating enzyme and is responsible for formation of the cyclo-Arg-Trp (cRW) diketopiperazine. AvaB then acts as a multifunctional flavoenzyme that is responsible for generating the cyclo-Arg-formylkynurenine DKP, which can be deformylated by avaC. AvaB then further catalyzes an additional N-oxidation followed by cyclization and dehydration. The next step is an N-acetylation of the guanidine group catalyzed by the arginine N-acetyltransferase avaD. The roles of the additional enzymes identified within the ava cluster still have to be determined. The sequence is that of Ava biosynthesis cluster protein O from Aspergillus versicolor.